A 337-amino-acid chain; its full sequence is MGNPILAGLGFSLPKRQVSNHDLVGRINTSDEFIVERTGVRTRYHVEPEQAVSALMVPAARQAIEAAGLLPEDIDLLLVNTLSPDHHDPSQACLIQPLLGLRHIPVLDIRAQCSGLLYGLQMARGQILAGLARHVLVVCGEVLSKRMDCSDRGRNLSILLGDGAGAVVVSAGESLEDGLLDLRLGADGNYFDLLMTAAPGSASPTFLDENVLREGGGEFLMRGRPMFEHASQTLVRIAGEMLAAHELTLDDIDHVICHQPNLRILDAVQEQLGIPQHKFAVTVDRLGNMASASTPVTLAMFWPDIQPGQRVLVLTYGSGATWGAALYRKPEEVNRPC.

2 residues coordinate anthraniloyl-CoA: threonine 29 and phenylalanine 33. Catalysis depends on cysteine 113, which acts as the Acyl-thioester intermediate. Residues 154 to 155, 221 to 224, and histidine 258 each bind anthraniloyl-CoA; these read RN and MRGR.

The protein belongs to the thiolase-like superfamily. FabH family. In terms of assembly, homodimer.

Its subcellular location is the cytoplasm. The catalysed reaction is anthraniloyl-CoA + malonyl-CoA + H(+) = (2-aminobenzoyl)acetyl-CoA + CO2 + CoA. Functionally, required for the biosynthesis of a number of signaling molecules, such as the quinolone signal 2-heptyl-3-hydroxy-4(1H)-quinolone (PQS), 2-heptyl-4-hydroxyquinoline (HHQ) and 2,4-dihydroxyquinoline (DHQ). These molecules are required for normal biofilm formation. Catalyzes the transfer of the anthraniloyl moiety from anthraniloyl-CoA to malonyl-CoA to form 2-aminobenzoylacetyl-CoA. The first step of the reaction is the formation of a covalent anthraniloyl-PqsD intermediate. Next, the short-lived intermediate 3-(2-aminophenyl)-3-oxopropanoyl-CoA is formed. An intramolecular rearrangement of this intermediate can give rise to 2,4-dihydroxyquinoline (DHQ). The protein is Anthraniloyl-CoA anthraniloyltransferase (pqsD) of Pseudomonas aeruginosa (strain ATCC 15692 / DSM 22644 / CIP 104116 / JCM 14847 / LMG 12228 / 1C / PRS 101 / PAO1).